The chain runs to 498 residues: Guanosine-5'-triphosphate,3'-diphosphate pyrophosphatase (498 aa).

This sequence belongs to the GppA/Ppx family. GppA subfamily.

It catalyses the reaction guanosine 3'-diphosphate 5'-triphosphate + H2O = guanosine 3',5'-bis(diphosphate) + phosphate + H(+). The protein operates within purine metabolism; ppGpp biosynthesis; ppGpp from GTP: step 2/2. In terms of biological role, catalyzes the conversion of pppGpp to ppGpp. Guanosine pentaphosphate (pppGpp) is a cytoplasmic signaling molecule which together with ppGpp controls the 'stringent response', an adaptive process that allows bacteria to respond to amino acid starvation, resulting in the coordinated regulation of numerous cellular activities. This chain is Guanosine-5'-triphosphate,3'-diphosphate pyrophosphatase, found in Yersinia pseudotuberculosis serotype O:1b (strain IP 31758).